Here is a 185-residue protein sequence, read N- to C-terminus: Capsid protein (185 aa).

A disordered region spans residues 136–185 (NAPILSTLPETTVVRRRDRGRSPRRRTPSPRRRRSPSPRRRRSQSRESQC). Residues 149–178 (VRRRDRGRSPRRRTPSPRRRRSPSPRRRRS) show a composition bias toward basic residues. Residues Ser-157, Ser-164, and Ser-172 each carry the phosphoserine; by host modification. A 1; half-length repeat occupies 157 to 163 (SPRRRTP). The interval 157–179 (SPRRRTPSPRRRRSPSPRRRRSQ) is 3 X 8 AA repeats of S-P-R-R-R-[PR]-S-Q. The Bipartite nuclear localization signal motif lies at 160 to 177 (RRTPSPRRRRSPSPRRRR). 2 repeat units span residues 164-171 (SPRRRRSP) and 172-179 (SPRRRRSQ). Residues 179 to 185 (QSRESQC) are RNA binding.

This sequence belongs to the orthohepadnavirus core antigen family. In terms of assembly, homodimerizes, then multimerizes. Interacts with cytosol exposed regions of viral L glycoprotein present in the reticulum-to-Golgi compartment. Interacts with human FLNB. Phosphorylated form interacts with host importin alpha; this interaction depends on the exposure of the NLS, which itself depends upon genome maturation and/or phosphorylation of the capsid protein. Interacts with host NUP153. Phosphorylated by host SRPK1, SRPK2, and maybe protein kinase C or GAPDH. Phosphorylation is critical for pregenomic RNA packaging. Protein kinase C phosphorylation is stimulated by HBx protein and may play a role in transport of the viral genome to the nucleus at the late step during the viral replication cycle.

The protein resides in the virion. The protein localises to the host cytoplasm. In terms of biological role, self assembles to form an icosahedral capsid. Most capsids appear to be large particles with an icosahedral symmetry of T=4 and consist of 240 copies of capsid protein, though a fraction forms smaller T=3 particles consisting of 180 capsid proteins. Entering capsids are transported along microtubules to the nucleus. Phosphorylation of the capsid is thought to induce exposure of nuclear localization signal in the C-terminal portion of the capsid protein that allows binding to the nuclear pore complex via the importin (karyopherin-) alpha and beta. Capsids are imported in intact form through the nuclear pore into the nuclear basket, where it probably binds NUP153. Only capsids that contain the mature viral genome can release the viral DNA and capsid protein into the nucleoplasm. Immature capsids get stuck in the basket. Capsids encapsulate the pre-genomic RNA and the P protein. Pre-genomic RNA is reverse-transcribed into DNA while the capsid is still in the cytoplasm. The capsid can then either be directed to the nucleus, providing more genomes for transcription, or bud through the endoplasmic reticulum to provide new virions. The protein is Capsid protein of Hepatitis B virus genotype A2 subtype adw2 (strain Rutter 1979) (HBV-A).